Consider the following 473-residue polypeptide: Photosystem II CP43 reaction center protein (473 aa).

The propeptide occupies 1–14 (MKTLYSLRRSYPVE). At T15 the chain carries N-acetylthreonine. Position 15 is a phosphothreonine (T15). The next 5 helical transmembrane spans lie at 69–93 (LFEV…PHLA), 134–155 (LIGP…KDKN), 178–200 (KALY…RKIT), 255–275 (KPFA…LSYS), and 291–312 (WFNN…ASQA). E367 provides a ligand contact to [CaMn4O5] cluster. Residues 447–471 (RARAAAAGFEKGIDRDTEPVLFMNP) form a helical membrane-spanning segment.

Belongs to the PsbB/PsbC family. PsbC subfamily. In terms of assembly, PSII is composed of 1 copy each of membrane proteins PsbA, PsbB, PsbC, PsbD, PsbE, PsbF, PsbH, PsbI, PsbJ, PsbK, PsbL, PsbM, PsbT, PsbX, PsbY, PsbZ, Psb30/Ycf12, at least 3 peripheral proteins of the oxygen-evolving complex and a large number of cofactors. It forms dimeric complexes. Binds multiple chlorophylls and provides some of the ligands for the Ca-4Mn-5O cluster of the oxygen-evolving complex. It may also provide a ligand for a Cl- that is required for oxygen evolution. PSII binds additional chlorophylls, carotenoids and specific lipids. is required as a cofactor.

It is found in the plastid. The protein localises to the chloroplast thylakoid membrane. One of the components of the core complex of photosystem II (PSII). It binds chlorophyll and helps catalyze the primary light-induced photochemical processes of PSII. PSII is a light-driven water:plastoquinone oxidoreductase, using light energy to abstract electrons from H(2)O, generating O(2) and a proton gradient subsequently used for ATP formation. The polypeptide is Photosystem II CP43 reaction center protein (Zygnema circumcarinatum (Green alga)).